A 78-amino-acid chain; its full sequence is Acyl carrier protein (78 aa).

A Carrier domain is found at 2–77 (STIEERVKKI…AAIDYVNAHQ (76 aa)). O-(pantetheine 4'-phosphoryl)serine is present on Ser37.

It belongs to the acyl carrier protein (ACP) family. Post-translationally, 4'-phosphopantetheine is transferred from CoA to a specific serine of apo-ACP by AcpS. This modification is essential for activity because fatty acids are bound in thioester linkage to the sulfhydryl of the prosthetic group.

The protein localises to the cytoplasm. Its pathway is lipid metabolism; fatty acid biosynthesis. Functionally, carrier of the growing fatty acid chain in fatty acid biosynthesis. In Pseudomonas entomophila (strain L48), this protein is Acyl carrier protein.